We begin with the raw amino-acid sequence, 385 residues long: tRNA(Met) cytidine acetate ligase (385 aa).

ATP-binding positions include 7 to 20 (VAEY…HEFL), Gly101, Asn153, and Arg178.

Belongs to the TmcAL family.

Its subcellular location is the cytoplasm. The enzyme catalyses cytidine(34) in elongator tRNA(Met) + acetate + ATP = N(4)-acetylcytidine(34) in elongator tRNA(Met) + AMP + diphosphate. Functionally, catalyzes the formation of N(4)-acetylcytidine (ac(4)C) at the wobble position of elongator tRNA(Met), using acetate and ATP as substrates. First activates an acetate ion to form acetyladenylate (Ac-AMP) and then transfers the acetyl group to tRNA to form ac(4)C34. This is tRNA(Met) cytidine acetate ligase from Lactobacillus gasseri (strain ATCC 33323 / DSM 20243 / BCRC 14619 / CIP 102991 / JCM 1131 / KCTC 3163 / NCIMB 11718 / NCTC 13722 / AM63).